A 327-amino-acid chain; its full sequence is uncharacterized protein (327 aa).

The S4 RNA-binding domain maps to 32–105 (VRLDKWLAEQ…IPLDILYEDE (74 aa)). Residue Asp156 is part of the active site.

The protein belongs to the pseudouridine synthase RluA family.

The enzyme catalyses a uridine in RNA = a pseudouridine in RNA. This is an uncharacterized protein from Synechocystis sp. (strain ATCC 27184 / PCC 6803 / Kazusa).